The following is a 187-amino-acid chain: uncharacterized protein (187 aa).

The segment at 42–63 (RTNGPGKDSFSFSTSGSKPSSS) is disordered. The segment covering 50–63 (SFSFSTSGSKPSSS) has biased composition (low complexity).

This is an uncharacterized protein from Saccharomyces cerevisiae (strain ATCC 204508 / S288c) (Baker's yeast).